Consider the following 160-residue polypeptide: MGVIKKPDLTDPVLRAKLAKGMGHHYYGEPAWPNDLLYMFPVCILGTIACNVGLAVLEPSLIGEPANPFATPLEILPEWYFFPVFQILRVVPNKLLGVLLMASVPVGLITVPFIENVNKFQNPFRRPVATTIFLIGTVVAVWLGIGATLPIDTSLTLGLF.

3 helical membrane-spanning segments follow: residues 36-56 (LLYMFPVCILGTIACNVGLAV), 95-115 (LLGVLLMASVPVGLITVPFIE), and 131-151 (TIFLIGTVVAVWLGIGATLPI).

This sequence belongs to the cytochrome b family. PetD subfamily. The 4 large subunits of the cytochrome b6-f complex are cytochrome b6, subunit IV (17 kDa polypeptide, petD), cytochrome f and the Rieske protein, while the 4 small subunits are petG, petL, petM and petN. The complex functions as a dimer.

It localises to the plastid. The protein localises to the chloroplast thylakoid membrane. Component of the cytochrome b6-f complex, which mediates electron transfer between photosystem II (PSII) and photosystem I (PSI), cyclic electron flow around PSI, and state transitions. The polypeptide is Cytochrome b6-f complex subunit 4 (Staurastrum punctulatum (Green alga)).